An 858-amino-acid polypeptide reads, in one-letter code: Large structural phosphoprotein (858 aa).

Residues 603–629 are disordered; sequence DVSRGGKGNSRDLYSGGNAEKKETSGK.

Belongs to the herpesviridae large structural phosphoprotein family. Homotetramer. Interacts with the major capsid protein. 180 tegument protein pU11 tetramers bind to the virion capsid. In terms of processing, phosphorylated at multiple sites.

It is found in the virion tegument. This is Large structural phosphoprotein (U11) from Homo sapiens (Human).